The chain runs to 572 residues: Proline--tRNA ligase (572 aa).

The protein belongs to the class-II aminoacyl-tRNA synthetase family. ProS type 1 subfamily. In terms of assembly, homodimer.

It is found in the cytoplasm. It carries out the reaction tRNA(Pro) + L-proline + ATP = L-prolyl-tRNA(Pro) + AMP + diphosphate. Catalyzes the attachment of proline to tRNA(Pro) in a two-step reaction: proline is first activated by ATP to form Pro-AMP and then transferred to the acceptor end of tRNA(Pro). As ProRS can inadvertently accommodate and process non-cognate amino acids such as alanine and cysteine, to avoid such errors it has two additional distinct editing activities against alanine. One activity is designated as 'pretransfer' editing and involves the tRNA(Pro)-independent hydrolysis of activated Ala-AMP. The other activity is designated 'posttransfer' editing and involves deacylation of mischarged Ala-tRNA(Pro). The misacylated Cys-tRNA(Pro) is not edited by ProRS. The polypeptide is Proline--tRNA ligase (Escherichia coli O127:H6 (strain E2348/69 / EPEC)).